The following is a 724-amino-acid chain: Eukaryotic elongation factor 2 kinase (724 aa).

A2 bears the N-acetylalanine mark. S27 carries the phosphoserine modification. The residue at position 61 (S61) is a Phosphoserine; by autocatalysis. Residues S70, S73, and S77 each carry the phosphoserine modification. Residues 80–93 (FKEAWKHAIEKAKH) form a calmodulin-binding region. The Alpha-type protein kinase domain occupies 115 to 325 (RYNAVTGEWL…ICQSMGLTPF (211 aa)). At S242 the chain carries Phosphoserine. 295 to 301 (GDGNLGV) is a binding site for ATP. T347 and T352 each carry phosphothreonine; by autocatalysis. A disordered region spans residues 353–476 (EEKCGSPRIR…HESDEDSLGS (124 aa)). S358 is modified (phosphoserine; by MAPK13 and CDK1). Low complexity predominate over residues 358 to 376 (SPRIRTLSSSRPPLLLRLS). Position 365 is a phosphoserine; by autocatalysis, RPS6KA1 and RPS6KB1 (S365). Residues 385–403 (SDVTFDSLPSSPSSATPHS) are compositionally biased toward polar residues. S391 is modified (phosphoserine). S397 is modified (phosphoserine; by AMPK). Composition is skewed to basic and acidic residues over residues 421-435 (GPRD…RDSE) and 444-469 (SEKR…RHES). Residues S434, S444, and S469 each carry the phosphoserine modification. The residue at position 473 (S473) is a Phosphoserine; by autocatalysis. A Phosphoserine modification is found at S476. S499 carries the post-translational modification Phosphoserine; by PKA.

This sequence belongs to the protein kinase superfamily. Alpha-type protein kinase family. In terms of assembly, monomer or homodimer. Interacts with Calmodulin/CALM1; this interaction is strictly required for phosphorylation activity. Autophosphorylated at multiple residues, Thr-347 being the major site. Phosphorylated by AMP-activated protein kinase AMPK at Ser-397 leading to EEF2K activation and protein synthesis inhibition. Phosphorylated by TRPM7 at Ser-77 resulting in improved protein stability, higher EE2F phosphorylated and subsequently reduced rate of protein synthesis. Phosphorylation by other kinases such as CDK1 and MAPK13 at Ser-358 or RPS6KA1 and RPS6KB1 at Ser-365 instead decrease EEF2K activity and promote protein synthesis. As to expression, ubiquitously expressed. Particularly abundant in skeletal muscle and heart.

The enzyme catalyses [translation elongation factor 2] + ATP = [translation elongation factor 2]-phosphate + ADP + H(+). With respect to regulation, undergoes calcium/calmodulin-dependent intramolecular autophosphorylation, and this results in it becoming partially calcium/calmodulin-independent. Threonine kinase that regulates protein synthesis by controlling the rate of peptide chain elongation. Upon activation by a variety of upstream kinases including AMPK or TRPM7, phosphorylates the elongation factor EEF2 at a single site, renders it unable to bind ribosomes and thus inactive. In turn, the rate of protein synthesis is reduced. This is Eukaryotic elongation factor 2 kinase (Eef2k) from Mus musculus (Mouse).